Here is a 178-residue protein sequence, read N- to C-terminus: Adenine phosphoribosyltransferase (178 aa).

It belongs to the purine/pyrimidine phosphoribosyltransferase family. In terms of assembly, homodimer.

It localises to the cytoplasm. It carries out the reaction AMP + diphosphate = 5-phospho-alpha-D-ribose 1-diphosphate + adenine. Its pathway is purine metabolism; AMP biosynthesis via salvage pathway; AMP from adenine: step 1/1. Functionally, catalyzes a salvage reaction resulting in the formation of AMP, that is energically less costly than de novo synthesis. This Erythrobacter litoralis (strain HTCC2594) protein is Adenine phosphoribosyltransferase.